The chain runs to 200 residues: dITP/XTP pyrophosphatase (200 aa).

7–12 (TSNKHK) is a binding site for substrate. Mg(2+) contacts are provided by glutamate 38 and aspartate 73. The Proton acceptor role is filled by aspartate 73. Substrate contacts are provided by residues serine 74, 154–157 (FGYD), lysine 177, and 182–183 (HR).

This sequence belongs to the HAM1 NTPase family. Homodimer. Requires Mg(2+) as cofactor.

The enzyme catalyses XTP + H2O = XMP + diphosphate + H(+). It carries out the reaction dITP + H2O = dIMP + diphosphate + H(+). It catalyses the reaction ITP + H2O = IMP + diphosphate + H(+). Its function is as follows. Pyrophosphatase that catalyzes the hydrolysis of nucleoside triphosphates to their monophosphate derivatives, with a high preference for the non-canonical purine nucleotides XTP (xanthosine triphosphate), dITP (deoxyinosine triphosphate) and ITP. Seems to function as a house-cleaning enzyme that removes non-canonical purine nucleotides from the nucleotide pool, thus preventing their incorporation into DNA/RNA and avoiding chromosomal lesions. The protein is dITP/XTP pyrophosphatase of Campylobacter jejuni subsp. jejuni serotype O:2 (strain ATCC 700819 / NCTC 11168).